Here is a 197-residue protein sequence, read N- to C-terminus: Peptide deformylase (197 aa).

2 residues coordinate Fe cation: cysteine 106 and histidine 148. Glutamate 149 is an active-site residue. Histidine 152 lines the Fe cation pocket.

This sequence belongs to the polypeptide deformylase family. Requires Fe(2+) as cofactor.

It catalyses the reaction N-terminal N-formyl-L-methionyl-[peptide] + H2O = N-terminal L-methionyl-[peptide] + formate. Removes the formyl group from the N-terminal Met of newly synthesized proteins. Requires at least a dipeptide for an efficient rate of reaction. N-terminal L-methionine is a prerequisite for activity but the enzyme has broad specificity at other positions. In Mycobacterium sp. (strain JLS), this protein is Peptide deformylase.